We begin with the raw amino-acid sequence, 208 residues long: Calcyphosin-like protein (208 aa).

4 EF-hand domains span residues alanine 39–valine 74, methionine 75–arginine 110, alanine 111–proline 146, and serine 154–serine 191. Ca(2+)-binding residues include aspartate 52, aspartate 54, asparagine 56, threonine 58, glutamate 63, aspartate 88, aspartate 90, asparagine 92, threonine 94, and glutamate 99.

The protein localises to the cytoplasm. This Homo sapiens (Human) protein is Calcyphosin-like protein (CAPSL).